Here is a 493-residue protein sequence, read N- to C-terminus: Glutamyl-tRNA(Gln) amidotransferase subunit A (493 aa).

Active-site charge relay system residues include K78 and S158. S182 acts as the Acyl-ester intermediate in catalysis.

Belongs to the amidase family. GatA subfamily. As to quaternary structure, heterotrimer of A, B and C subunits.

The catalysed reaction is L-glutamyl-tRNA(Gln) + L-glutamine + ATP + H2O = L-glutaminyl-tRNA(Gln) + L-glutamate + ADP + phosphate + H(+). In terms of biological role, allows the formation of correctly charged Gln-tRNA(Gln) through the transamidation of misacylated Glu-tRNA(Gln) in organisms which lack glutaminyl-tRNA synthetase. The reaction takes place in the presence of glutamine and ATP through an activated gamma-phospho-Glu-tRNA(Gln). This is Glutamyl-tRNA(Gln) amidotransferase subunit A from Methylorubrum populi (strain ATCC BAA-705 / NCIMB 13946 / BJ001) (Methylobacterium populi).